A 458-amino-acid polypeptide reads, in one-letter code: MASTITGSQDCIVNHRGEVDGEPELDISPCQQWGEASSPISRNRDSVMTLQSGCFENIESETYLPLKVSSQIDTQDSSVKFCKNEPQDHQESRRLFVMEESTERKVIKGESCSENLQVKLVSDGQELASPLLNGEATCQNGQLKESLDPIDCNCKDIHGWKSQVVSCSQQRAHTEEKPCDHNNCGKILNTSPDGHPYEKIHTAEKQYECSQCGKNFSQSSELLLHQRDHTEEKPYKCEQCGKGFTRSSSLLIHQAVHTDEKPYKCDKCGKGFTRSSSLLIHHAVHTGEKPYKCDKCGKGFSQSSKLHIHQRVHTGEKPYECEECGMSFSQRSNLHIHQRVHTGERPYKCGECGKGFSQSSNLHIHRCIHTGEKPYQCYECGKGFSQSSDLRIHLRVHTGEKPYHCGKCGKGFSQSSKLLIHQRVHTGEKPYECSKCGKGFSQSSNLHIHQRVHKKDPR.

Lys-108 participates in a covalent cross-link: Glycyl lysine isopeptide (Lys-Gly) (interchain with G-Cter in SUMO2). Phosphoserine is present on Ser-191. 9 C2H2-type zinc fingers span residues 207-229, 235-257, 263-285, 291-313, 319-341, 347-369, 375-397, 403-425, and 431-453; these read YECSQCGKNFSQSSELLLHQRDH, YKCEQCGKGFTRSSSLLIHQAVH, YKCDKCGKGFTRSSSLLIHHAVH, YKCDKCGKGFSQSSKLHIHQRVH, YECEECGMSFSQRSNLHIHQRVH, YKCGECGKGFSQSSNLHIHRCIH, YQCYECGKGFSQSSDLRIHLRVH, YHCGKCGKGFSQSSKLLIHQRVH, and YECSKCGKGFSQSSNLHIHQRVH.

The protein belongs to the krueppel C2H2-type zinc-finger protein family.

It localises to the nucleus. Functionally, may be involved in transcriptional regulation. This is Zinc finger protein 239 (ZNF239) from Homo sapiens (Human).